A 636-amino-acid polypeptide reads, in one-letter code: Threonine--tRNA ligase (636 aa).

Residues methionine 1–threonine 63 form the TGS domain. The interval aspartate 243 to proline 534 is catalytic. Positions 335, 386, and 511 each coordinate Zn(2+).

Belongs to the class-II aminoacyl-tRNA synthetase family. Homodimer. Zn(2+) serves as cofactor.

The protein resides in the cytoplasm. The enzyme catalyses tRNA(Thr) + L-threonine + ATP = L-threonyl-tRNA(Thr) + AMP + diphosphate + H(+). Its function is as follows. Catalyzes the attachment of threonine to tRNA(Thr) in a two-step reaction: L-threonine is first activated by ATP to form Thr-AMP and then transferred to the acceptor end of tRNA(Thr). Also edits incorrectly charged L-seryl-tRNA(Thr). The polypeptide is Threonine--tRNA ligase (Geobacter sp. (strain M21)).